The chain runs to 69 residues: DNA-directed RNA polymerase subunit epsilon (69 aa).

Belongs to the RNA polymerase subunit epsilon family. As to quaternary structure, RNAP is composed of a core of 2 alpha, a beta and a beta' subunit. The core is associated with a delta subunit, and at least one of epsilon or omega. When a sigma factor is associated with the core the holoenzyme is formed, which can initiate transcription.

It carries out the reaction RNA(n) + a ribonucleoside 5'-triphosphate = RNA(n+1) + diphosphate. Functionally, a non-essential component of RNA polymerase (RNAP). The polypeptide is DNA-directed RNA polymerase subunit epsilon (Listeria welshimeri serovar 6b (strain ATCC 35897 / DSM 20650 / CCUG 15529 / CIP 8149 / NCTC 11857 / SLCC 5334 / V8)).